The chain runs to 46 residues: Protein PsbN (46 aa).

The chain crosses the membrane as a helical span at residues 10 to 30 (VAIAVLAALLGLTGFGVYTAF).

This sequence belongs to the PsbN family.

Its subcellular location is the cellular thylakoid membrane. In terms of biological role, may play a role in photosystem I and II biogenesis. The protein is Protein PsbN of Synechococcus sp. (strain CC9311).